We begin with the raw amino-acid sequence, 321 residues long: Glutaminase (321 aa).

Residues Ser-69, Asn-120, Glu-165, Asn-172, Tyr-196, Tyr-248, and Val-266 each coordinate substrate.

Belongs to the glutaminase family. As to quaternary structure, homotetramer.

It carries out the reaction L-glutamine + H2O = L-glutamate + NH4(+). In Bacteroides fragilis (strain ATCC 25285 / DSM 2151 / CCUG 4856 / JCM 11019 / LMG 10263 / NCTC 9343 / Onslow / VPI 2553 / EN-2), this protein is Glutaminase.